The following is a 201-amino-acid chain: dTTP/UTP pyrophosphatase (201 aa).

The active-site Proton acceptor is the Asp-73.

The protein belongs to the Maf family. YhdE subfamily. A divalent metal cation serves as cofactor.

The protein localises to the cytoplasm. The catalysed reaction is dTTP + H2O = dTMP + diphosphate + H(+). It catalyses the reaction UTP + H2O = UMP + diphosphate + H(+). Nucleoside triphosphate pyrophosphatase that hydrolyzes dTTP and UTP. May have a dual role in cell division arrest and in preventing the incorporation of modified nucleotides into cellular nucleic acids. The polypeptide is dTTP/UTP pyrophosphatase (Pseudomonas aeruginosa (strain ATCC 15692 / DSM 22644 / CIP 104116 / JCM 14847 / LMG 12228 / 1C / PRS 101 / PAO1)).